A 436-amino-acid chain; its full sequence is Cytochrome b5-related protein (436 aa).

A Cytochrome b5 heme-binding domain is found at 16 to 100 (PTYRNSALIT…IAKYKVRDAA (85 aa)). 2 residues coordinate heme: histidine 59 and histidine 82.

Muscle.

In terms of biological role, may play a role in muscle cell metabolism. The protein is Cytochrome b5-related protein (Cyt-b5-r) of Drosophila melanogaster (Fruit fly).